We begin with the raw amino-acid sequence, 132 residues long: Small ribosomal subunit protein bS6 (132 aa).

The tract at residues 96–132 is disordered; that stretch reads HAEGPSIQMQKRDERERGDRGDRPDRGDRGERGGFRR. The span at 105 to 132 shows a compositional bias: basic and acidic residues; the sequence is QKRDERERGDRGDRPDRGDRGERGGFRR.

The protein belongs to the bacterial ribosomal protein bS6 family.

Binds together with bS18 to 16S ribosomal RNA. This chain is Small ribosomal subunit protein bS6, found in Cereibacter sphaeroides (strain ATCC 17025 / ATH 2.4.3) (Rhodobacter sphaeroides).